The chain runs to 403 residues: Argininosuccinate synthase (403 aa).

Ala10 to Ser18 is an ATP binding site. Tyr87 is a binding site for L-citrulline. Position 117 (Gly117) interacts with ATP. L-aspartate-binding residues include Thr119, Asn123, and Asp124. Asn123 contacts L-citrulline. Residues Arg127, Ser175, Glu260, and Tyr272 each coordinate L-citrulline.

The protein belongs to the argininosuccinate synthase family. Type 1 subfamily. In terms of assembly, homotetramer.

Its subcellular location is the cytoplasm. It carries out the reaction L-citrulline + L-aspartate + ATP = 2-(N(omega)-L-arginino)succinate + AMP + diphosphate + H(+). Its pathway is amino-acid biosynthesis; L-arginine biosynthesis; L-arginine from L-ornithine and carbamoyl phosphate: step 2/3. The polypeptide is Argininosuccinate synthase (Bacillus subtilis (strain 168)).